A 388-amino-acid chain; its full sequence is MNLHEYQAKQLFARYGLPAPVGYACTTPREAEEAASKIGAGPWVVKCQVHAGGRGKAGGVKVVKSKEEIRAFAENWLGKRLVTYQTDANGQPVNQILVEAATDIGKELYLGAVVDRSSRRVVFMASTEGGVEIEKVAEETPHLIHKVALDPLTGPMPYQGRELAFKLGLEGKLVQQFTKIFMGLATIFLERDLALIEINPLVITKQGDLICLDGKLGADGNALFRQPDLREMRDQSQEDPREAQAAQWELNYVALDGNIGCMVNGAGLAMGTMDIVKLHGGEPANFLDVGGGATKERVTEAFKIILSDDNVKAVLVNIFGGIVRCDLIADGIIGAVEEVGVNVPVVVRLEGNNAELGAKKLADSGLNIIAAKSLTDAAQQVVAAVEGK.

Positions 9-244 constitute an ATP-grasp domain; the sequence is KQLFARYGLP…QSQEDPREAQ (236 aa). ATP is bound by residues K46, 53 to 55, E99, T102, and E107; that span reads GRG. Residues N199 and D213 each coordinate Mg(2+). Substrate contacts are provided by residues N264 and 321 to 323; that span reads GIV.

It belongs to the succinate/malate CoA ligase beta subunit family. As to quaternary structure, heterotetramer of two alpha and two beta subunits. Mg(2+) serves as cofactor.

The catalysed reaction is succinate + ATP + CoA = succinyl-CoA + ADP + phosphate. The enzyme catalyses GTP + succinate + CoA = succinyl-CoA + GDP + phosphate. The protein operates within carbohydrate metabolism; tricarboxylic acid cycle; succinate from succinyl-CoA (ligase route): step 1/1. Functionally, succinyl-CoA synthetase functions in the citric acid cycle (TCA), coupling the hydrolysis of succinyl-CoA to the synthesis of either ATP or GTP and thus represents the only step of substrate-level phosphorylation in the TCA. The beta subunit provides nucleotide specificity of the enzyme and binds the substrate succinate, while the binding sites for coenzyme A and phosphate are found in the alpha subunit. This chain is Succinate--CoA ligase [ADP-forming] subunit beta, found in Salmonella choleraesuis (strain SC-B67).